The chain runs to 268 residues: Mitochondrial distribution and morphology protein 12 (268 aa).

The SMP-LTD domain maps to 1–266 (MSIDLEWCKL…FPNFHTIVMA (266 aa)). The tract at residues 66 to 136 (EDDEEGSDRG…PPPAENPHPN (71 aa)) is disordered. The segment covering 102-111 (PATNVTSSLD) has biased composition (polar residues). Residues 112-121 (TRSDQPDDQK) show a composition bias toward basic and acidic residues.

The protein belongs to the MDM12 family. Component of the ER-mitochondria encounter structure (ERMES) or MDM complex, composed of MMM1, MDM10, MDM12 and MDM34. An MMM1 homodimer associates with one molecule of MDM12 on each side in a pairwise head-to-tail manner, and the SMP-LTD domains of MMM1 and MDM12 generate a continuous hydrophobic tunnel for phospholipid trafficking.

The protein resides in the mitochondrion outer membrane. Its subcellular location is the endoplasmic reticulum membrane. In terms of biological role, component of the ERMES/MDM complex, which serves as a molecular tether to connect the endoplasmic reticulum (ER) and mitochondria. Components of this complex are involved in the control of mitochondrial shape and protein biogenesis, and function in nonvesicular lipid trafficking between the ER and mitochondria. MDM12 is required for the interaction of the ER-resident membrane protein MMM1 and the outer mitochondrial membrane-resident beta-barrel protein MDM10. The MDM12-MMM1 subcomplex functions in the major beta-barrel assembly pathway that is responsible for biogenesis of all mitochondrial outer membrane beta-barrel proteins, and acts in a late step after the SAM complex. The MDM10-MDM12-MMM1 subcomplex further acts in the TOM40-specific pathway after the action of the MDM12-MMM1 complex. Essential for establishing and maintaining the structure of mitochondria and maintenance of mtDNA nucleoids. The polypeptide is Mitochondrial distribution and morphology protein 12 (Laccaria bicolor (strain S238N-H82 / ATCC MYA-4686) (Bicoloured deceiver)).